Reading from the N-terminus, the 493-residue chain is Protein nucleotidyltransferase YdiU (493 aa).

G94, G96, R97, K117, D129, G130, R180, and R187 together coordinate ATP. D256 (proton acceptor) is an active-site residue. The Mg(2+) site is built by N257 and D266. Residue D266 coordinates ATP.

It belongs to the SELO family. Mg(2+) is required as a cofactor. The cofactor is Mn(2+).

It catalyses the reaction L-seryl-[protein] + ATP = 3-O-(5'-adenylyl)-L-seryl-[protein] + diphosphate. It carries out the reaction L-threonyl-[protein] + ATP = 3-O-(5'-adenylyl)-L-threonyl-[protein] + diphosphate. The catalysed reaction is L-tyrosyl-[protein] + ATP = O-(5'-adenylyl)-L-tyrosyl-[protein] + diphosphate. The enzyme catalyses L-histidyl-[protein] + UTP = N(tele)-(5'-uridylyl)-L-histidyl-[protein] + diphosphate. It catalyses the reaction L-seryl-[protein] + UTP = O-(5'-uridylyl)-L-seryl-[protein] + diphosphate. It carries out the reaction L-tyrosyl-[protein] + UTP = O-(5'-uridylyl)-L-tyrosyl-[protein] + diphosphate. Its function is as follows. Nucleotidyltransferase involved in the post-translational modification of proteins. It can catalyze the addition of adenosine monophosphate (AMP) or uridine monophosphate (UMP) to a protein, resulting in modifications known as AMPylation and UMPylation. The sequence is that of Protein nucleotidyltransferase YdiU from Hahella chejuensis (strain KCTC 2396).